Consider the following 230-residue polypeptide: DNA ADP-ribosyl transferase (230 aa).

The 205-residue stretch at 26–230 (WIVWHFTHAD…KYVIKPGMYY (205 aa)) folds into the DarT domain. Residues 30 to 32 (HFT), G39, L47, and R67 each bind NAD(+). The active-site Proton acceptor is the R67. E183 is a catalytic residue.

This sequence belongs to the DarT ADP-ribosyltransferase family. Interacts with cognate antitoxin DarG (via C-terminus); this heterodimeric complex neutralizes the toxic effect of DarT by preventing ssDNA binding to DarT and consequently inactivating the toxin by direct protein-protein interactions.

It carries out the reaction a thymidine in DNA + NAD(+) = an N-(ADP-alpha-D-ribosyl)-thymidine in DNA + nicotinamide + H(+). In terms of biological role, toxic component of the hybrid type II/IV toxin-antitoxin (TA) system DarTG, which plays a crucial role in controlling bacterial growth and bacteriophage infection. ADP-ribosylates ssDNA, preferentially in the motif TTTW. In case of phage infection, DarT toxin ADP-ribosylates DNA, which inhibits both viral DNA and RNA synthesis and leads to abortive infection. Its toxic effect is neutralized by cognate antitoxin DarG. This chain is DNA ADP-ribosyl transferase, found in Mycobacterium bovis (strain BCG / Pasteur 1173P2).